The primary structure comprises 329 residues: MSPSAHPDAPIIIFGTANFGSPEDSKGKLFGPVTVEQGREYLDVLQEFNVDVLDTARIYSGGESEKLLGALDASREFKMCTKASGTLDGCGTRDAVLSAFKASSEALGVKEVDTYYLHTPDRTTSLEETMDTINELHKAGSFKTFGISNLRADEVQHLHTYARSKNYILPTIYQGTYNLLSRQCETKLLPLLRTLGIRFYAYSPLCCGLLINAEAKLQASTGRWDTSHFGGKFMNALYNKPSYIAASNAFQDMCGKYGVRPAGAAYRWVRYHSELEGGLGDGMVVGASSARQLEESLGEIEKGPLEEGLVGELEGLWDLVKEDAPAYSL.

Asp-54 contributes to the NADP(+) binding site. The active-site Proton donor is the Tyr-59. Residue His-118 participates in substrate binding. NADP(+) is bound by residues 148 to 149 (SN), Gln-174, 203 to 213 (SPLCCGLLINA), and 288 to 296 (SSARQLEES).

It belongs to the aldo/keto reductase family. Aldo/keto reductase 2 subfamily.

It participates in mycotoxin biosynthesis. Its function is as follows. Oxidoreductase; part of the gene cluster that mediates the biosynthesis of sirodesmin PL, an epipolythiodioxopiperazine (ETP) characterized by a disulfide bridged cyclic dipeptide and that acts as a phytotoxin which is involved in the blackleg didease of canola. SirD catalyzes the O-prenylation of L-tyrosine (L-Tyr) in the presence of dimethylallyl diphosphate (DMAPP) to yield 4-O-dimethylallyl-L-Tyr, and therefore represents probably the first pathway-specific enzyme in the biosynthesis of sirodesmin PL. 4-O-dimethylallyl-L-Tyr, then undergoes condensation with L-Ser in a reaction catalyzed by the non-ribosomal peptide synthase sirP to form the diketopiperazine (DKP) backbone. Further bishydroxylation of the DKP performed by the cytochrome P450 monooxygenase sirC leads to the production of the intermediate phomamide. This step is essential to form the reactive thiol group required for toxicity of sirodesmin PL. The next steps of sirodesmin biosynthesis are not well understood yet, but some predictions could be made from intermediate compounds identification. Phomamide is converted into phomalizarine via oxidation, probably by sirT. Further oxidation, methylation (by sirM or sirN) and reduction steps convert phomalizarine to deacetyl sirodesmin. Finally, acetyltransferase sirH probably acetylates deacetyl sirodesmin to produce sirodesmin PL. In Leptosphaeria maculans (Blackleg fungus), this protein is Oxidoreductase sirO.